The sequence spans 1015 residues: Putative helicase mov-10-B.2 (1015 aa).

The disordered stretch occupies residues 94–130 (QWFRPRRRQQNQANATPGNVSSVTPSSDQGPSCPESG). Residues 109-123 (TPGNVSSVTPSSDQG) are compositionally biased toward polar residues. 555-562 (GPPGTGKT) lines the ATP pocket. A DEAG box motif is present at residues 677–680 (DEAG).

Belongs to the DNA2/NAM7 helicase family. SDE3 subfamily.

Its subcellular location is the cytoplasm. It is found in the P-body. The catalysed reaction is ATP + H2O = ADP + phosphate + H(+). Its function is as follows. Probable RNA helicase. Required for RNA-mediated gene silencing by the RNA-induced silencing complex (RISC). Required for both miRNA-mediated translational repression and miRNA-mediated cleavage of complementary mRNAs by RISC. The polypeptide is Putative helicase mov-10-B.2 (mov10b.2) (Danio rerio (Zebrafish)).